Consider the following 285-residue polypeptide: Acetylglutamate kinase (285 aa).

Residues 64-65, arginine 86, and asparagine 181 each bind substrate; that span reads GG.

The protein belongs to the acetylglutamate kinase family. ArgB subfamily.

The protein resides in the cytoplasm. The enzyme catalyses N-acetyl-L-glutamate + ATP = N-acetyl-L-glutamyl 5-phosphate + ADP. It functions in the pathway amino-acid biosynthesis; L-arginine biosynthesis; N(2)-acetyl-L-ornithine from L-glutamate: step 2/4. Functionally, catalyzes the ATP-dependent phosphorylation of N-acetyl-L-glutamate. The protein is Acetylglutamate kinase of Clostridium beijerinckii (strain ATCC 51743 / NCIMB 8052) (Clostridium acetobutylicum).